Here is a 235-residue protein sequence, read N- to C-terminus: Small ribosomal subunit protein uS2 (235 aa).

Belongs to the universal ribosomal protein uS2 family.

This chain is Small ribosomal subunit protein uS2, found in Synechococcus sp. (strain RCC307).